The sequence spans 430 residues: Enolase (430 aa).

Q165 lines the (2R)-2-phosphoglycerate pocket. Catalysis depends on E207, which acts as the Proton donor. Positions 244, 287, and 314 each coordinate Mg(2+). Residues K339, R368, S369, and K390 each coordinate (2R)-2-phosphoglycerate. K339 (proton acceptor) is an active-site residue.

It belongs to the enolase family. In terms of assembly, component of the RNA degradosome, a multiprotein complex involved in RNA processing and mRNA degradation. The cofactor is Mg(2+).

Its subcellular location is the cytoplasm. It localises to the secreted. The protein localises to the cell surface. The enzyme catalyses (2R)-2-phosphoglycerate = phosphoenolpyruvate + H2O. It participates in carbohydrate degradation; glycolysis; pyruvate from D-glyceraldehyde 3-phosphate: step 4/5. Catalyzes the reversible conversion of 2-phosphoglycerate (2-PG) into phosphoenolpyruvate (PEP). It is essential for the degradation of carbohydrates via glycolysis. The sequence is that of Enolase from Xanthomonas axonopodis pv. citri (strain 306).